Reading from the N-terminus, the 82-residue chain is MRLVVCLVFLASFALVCQGQVYKGGYTRPIPRPPPFVRPLPGGPIGPYNGCPISCRGISFSQARSCCSRLGRCCHVGKGYSG.

The N-terminal stretch at 1–19 (MRLVVCLVFLASFALVCQG) is a signal peptide. At Gln-20 the chain carries Pyrrolidone carboxylic acid. 3 disulfides stabilise this stretch: Cys-51–Cys-66, Cys-55–Cys-73, and Cys-67–Cys-74. Serine amide is present on Ser-81.

Belongs to the penaeidin family.

Its subcellular location is the cytoplasmic granule. Functionally, antibacterial and antifungal activity. Presents chitin-binding activity. The polypeptide is Penaeidin-3d (Penaeus vannamei (Whiteleg shrimp)).